The primary structure comprises 156 residues: Type IV major fimbrial protein FimA (156 aa).

A propeptide spans 1–7 (leader sequence); it reads MKSLQKG. The residue at position 8 (F8) is an N-methylphenylalanine. Residues 8 to 28 traverse the membrane as a helical segment; it reads FTLIELMIVVAIIGILAAIAI. 2 cysteine pairs are disulfide-bonded: C57-C67 and C140-C153.

Belongs to the N-Me-Phe pilin family. In terms of assembly, the pili are polar flexible filaments of about 5.4 nanometers diameter and 2.5 micrometers average length; they consist of only a single polypeptide chain arranged in a helical configuration of five subunits per turn in the assembled pilus.

The protein localises to the fimbrium. Its subcellular location is the membrane. In terms of biological role, major component of the type IV fimbriae that plays an essential role in twitching motility, natural transformation, and protease secretion. The chain is Type IV major fimbrial protein FimA (fimA) from Dichelobacter nodosus (Bacteroides nodosus).